The following is a 46-amino-acid chain: Large ribosomal subunit protein bL36B (46 aa).

It belongs to the bacterial ribosomal protein bL36 family.

This is Large ribosomal subunit protein bL36B from Enterobacter sp. (strain 638).